Here is a 664-residue protein sequence, read N- to C-terminus: Bifunctional polymyxin resistance protein ArnA (664 aa).

The segment at 1–308 is formyltransferase ArnAFT; sequence MSTKAVVFAY…EFGLVAGSQM (308 aa). His106 functions as the Proton donor; for formyltransferase activity in the catalytic mechanism. (6R)-10-formyltetrahydrofolate is bound by residues Arg116 and 138 to 142; that span reads VKRAD. Residues 318–664 form a dehydrogenase ArnADH region; the sequence is RRTRVLILGV…EAMAEKADQC (347 aa). Residues Asp351 and 372 to 373 each bind NAD(+); that span reads DI. Residues Ala397, Tyr402, and 436–437 each bind UDP-alpha-D-glucuronate; that span reads TS. The Proton acceptor; for decarboxylase activity role is filled by Glu438. UDP-alpha-D-glucuronate contacts are provided by residues Arg464, Asn495, 529 to 538, and Tyr616; that span reads RLVDGGAQKR. Catalysis depends on Arg622, which acts as the Proton donor; for decarboxylase activity.

This sequence in the N-terminal section; belongs to the Fmt family. UDP-L-Ara4N formyltransferase subfamily. In the C-terminal section; belongs to the NAD(P)-dependent epimerase/dehydratase family. UDP-glucuronic acid decarboxylase subfamily. Homohexamer, formed by a dimer of trimers.

It catalyses the reaction UDP-alpha-D-glucuronate + NAD(+) = UDP-beta-L-threo-pentopyranos-4-ulose + CO2 + NADH. The catalysed reaction is UDP-4-amino-4-deoxy-beta-L-arabinose + (6R)-10-formyltetrahydrofolate = UDP-4-deoxy-4-formamido-beta-L-arabinose + (6S)-5,6,7,8-tetrahydrofolate + H(+). It participates in nucleotide-sugar biosynthesis; UDP-4-deoxy-4-formamido-beta-L-arabinose biosynthesis; UDP-4-deoxy-4-formamido-beta-L-arabinose from UDP-alpha-D-glucuronate: step 1/3. It functions in the pathway nucleotide-sugar biosynthesis; UDP-4-deoxy-4-formamido-beta-L-arabinose biosynthesis; UDP-4-deoxy-4-formamido-beta-L-arabinose from UDP-alpha-D-glucuronate: step 3/3. The protein operates within bacterial outer membrane biogenesis; lipopolysaccharide biosynthesis. Bifunctional enzyme that catalyzes the oxidative decarboxylation of UDP-glucuronic acid (UDP-GlcUA) to UDP-4-keto-arabinose (UDP-Ara4O) and the addition of a formyl group to UDP-4-amino-4-deoxy-L-arabinose (UDP-L-Ara4N) to form UDP-L-4-formamido-arabinose (UDP-L-Ara4FN). The modified arabinose is attached to lipid A and is required for resistance to polymyxin and cationic antimicrobial peptides. This Pseudomonas syringae pv. syringae (strain B728a) protein is Bifunctional polymyxin resistance protein ArnA.